Consider the following 322-residue polypeptide: uncharacterized protein (322 aa).

A compositionally biased stretch (polar residues) spans 1 to 13 (MTNADEQNMGQQE). Disordered regions lie at residues 1 to 94 (MTNA…EEYE) and 125 to 322 (RREM…TDEE). Low complexity predominate over residues 14–31 (GTDTATTAQDTNTQTVGT). Residues 32-50 (QSENTQNTQQASDAQTEQT) are compositionally biased toward polar residues. Residues 64 to 75 (EVDEDDVLDAQE) are compositionally biased toward acidic residues. Composition is skewed to basic and acidic residues over residues 141-227 (GGDR…RGGD), 235-269 (RPRE…RGGD), 277-295 (RPRE…RTDD), and 308-322 (ARAD…TDEE).

This is an uncharacterized protein from Deinococcus radiodurans (strain ATCC 13939 / DSM 20539 / JCM 16871 / CCUG 27074 / LMG 4051 / NBRC 15346 / NCIMB 9279 / VKM B-1422 / R1).